Consider the following 438-residue polypeptide: Glutamyl-tRNA(Gln) amidotransferase subunit D (438 aa).

The Asparaginase/glutaminase domain occupies 91 to 421 (KNLSILSTGG…SEIYEIMKTN (331 aa)). Catalysis depends on residues Thr-101, Thr-177, Asp-178, and Lys-254.

It belongs to the asparaginase 1 family. GatD subfamily. Heterodimer of GatD and GatE.

The enzyme catalyses L-glutamyl-tRNA(Gln) + L-glutamine + ATP + H2O = L-glutaminyl-tRNA(Gln) + L-glutamate + ADP + phosphate + H(+). In terms of biological role, allows the formation of correctly charged Gln-tRNA(Gln) through the transamidation of misacylated Glu-tRNA(Gln) in organisms which lack glutaminyl-tRNA synthetase. The reaction takes place in the presence of glutamine and ATP through an activated gamma-phospho-Glu-tRNA(Gln). The GatDE system is specific for glutamate and does not act on aspartate. This chain is Glutamyl-tRNA(Gln) amidotransferase subunit D, found in Methanosphaera stadtmanae (strain ATCC 43021 / DSM 3091 / JCM 11832 / MCB-3).